The following is a 292-amino-acid chain: THO complex subunit 4B (292 aa).

The disordered stretch occupies residues 1–50 (MSGGLDMSLDDIIKSNRKPTGSRGRGGIGGGNNTGGRGGSGSNSGPSRRF). Position 2 is an N-acetylserine (serine 2). Over residues 23-42 (RGRGGIGGGNNTGGRGGSGS) the composition is skewed to gly residues. An RRM domain is found at 108–185 (TKLYISNLDY…KLMKIEIVGT (78 aa)). Over residues 241–252 (GGGFGGGNFRGG) the composition is skewed to gly residues. Positions 241 to 292 (GGGFGGGNFRGGRGARGRGGRGSGGRGRDENVSAEDLDAELDKYHKEAMETS) are disordered. Residues 280 to 292 (ELDKYHKEAMETS) are compositionally biased toward basic and acidic residues.

The protein belongs to the ALYREF family. As to quaternary structure, interacts with RH15 and RH56.

The protein resides in the nucleus. Its subcellular location is the nucleoplasm. Export adapter involved in nuclear export of spliced and unspliced mRNA. In Arabidopsis thaliana (Mouse-ear cress), this protein is THO complex subunit 4B (ALY2).